The chain runs to 126 residues: Holo-[acyl-carrier-protein] synthase (126 aa).

Mg(2+) is bound by residues aspartate 9 and glutamate 58.

Belongs to the P-Pant transferase superfamily. AcpS family. Requires Mg(2+) as cofactor.

It is found in the cytoplasm. The enzyme catalyses apo-[ACP] + CoA = holo-[ACP] + adenosine 3',5'-bisphosphate + H(+). Functionally, transfers the 4'-phosphopantetheine moiety from coenzyme A to a Ser of acyl-carrier-protein. The polypeptide is Holo-[acyl-carrier-protein] synthase (Citrobacter koseri (strain ATCC BAA-895 / CDC 4225-83 / SGSC4696)).